The chain runs to 292 residues: 3-methyl-2-oxobutanoate hydroxymethyltransferase 2 (292 aa).

Mg(2+)-binding residues include D52 and D91. 3-methyl-2-oxobutanoate-binding positions include 52–53 (DS), D91, and K120. A Mg(2+)-binding site is contributed by E122. Catalysis depends on E189, which acts as the Proton acceptor.

Belongs to the PanB family. In terms of assembly, homodecamer; pentamer of dimers. It depends on Mg(2+) as a cofactor.

It localises to the cytoplasm. The catalysed reaction is 3-methyl-2-oxobutanoate + (6R)-5,10-methylene-5,6,7,8-tetrahydrofolate + H2O = 2-dehydropantoate + (6S)-5,6,7,8-tetrahydrofolate. The protein operates within cofactor biosynthesis; (R)-pantothenate biosynthesis; (R)-pantoate from 3-methyl-2-oxobutanoate: step 1/2. In terms of biological role, catalyzes the reversible reaction in which hydroxymethyl group from 5,10-methylenetetrahydrofolate is transferred onto alpha-ketoisovalerate to form ketopantoate. This Bradyrhizobium diazoefficiens (strain JCM 10833 / BCRC 13528 / IAM 13628 / NBRC 14792 / USDA 110) protein is 3-methyl-2-oxobutanoate hydroxymethyltransferase 2.